The following is an 826-amino-acid chain: E3 ubiquitin-protein ligase SH3RF1 (826 aa).

The RING-type zinc-finger motif lies at 12–53 (CPVCLERLDASAKVLPCQHTFCKRCLLGIVSSRKELRCPECR). A disordered region spans residues 80–130 (PRKAGDGGSAGNSTNALRAQGSVTTNGGLNDAQNTQSGQQRIQARSPPVRG). Residues 90-122 (GNSTNALRAQGSVTTNGGLNDAQNTQSGQQRIQ) show a composition bias toward polar residues. 2 consecutive SH3 domains span residues 132–191 (PQLP…IIKP) and 194–257 (QPPP…FNSA). A disordered region spans residues 266–319 (KPSGADTGEGSSGTSHSGNSQKQADAKKNTKKRHSFTSLTMSNKSSQSVQNRHS). The segment covering 273–285 (GEGSSGTSHSGNS) has biased composition (low complexity). Residues 301–317 (FTSLTMSNKSSQSVQNR) show a composition bias toward polar residues. The region spanning 398 to 459 (ARPSVFIAIY…PGNYVAPVTR (62 aa)) is the SH3 3 domain. 2 disordered regions span residues 647-694 (NSAA…QTNS) and 725-759 (DSVSASTPAQDNRKPASLDNNIPIAPPPRQPCSSL). Basic and acidic residues predominate over residues 652–663 (KQDKDSKKEKKG). Residues 767 to 826 (RPCERYRVMVSYPPQSEAELELKEGDIVFVHKKREDGWFKGTLQRNGKTGLFPGSFVENI) form the SH3 4 domain.

This sequence belongs to the SH3RF family. Autoubiquitinated. Ubiquitinated by SH3RF2, leading to proteasome-mediated degradation.

The protein resides in the cytoplasm. It is found in the perinuclear region. The protein localises to the cell projection. Its subcellular location is the lamellipodium. It localises to the golgi apparatus. The protein resides in the trans-Golgi network. The catalysed reaction is S-ubiquitinyl-[E2 ubiquitin-conjugating enzyme]-L-cysteine + [acceptor protein]-L-lysine = [E2 ubiquitin-conjugating enzyme]-L-cysteine + N(6)-ubiquitinyl-[acceptor protein]-L-lysine.. The protein operates within protein modification; protein ubiquitination. In terms of biological role, has E3 ubiquitin-protein ligase activity. In the absence of an external substrate, it can catalyze self-ubiquitination. Acts as a scaffold protein that contributes to the effective activation of the JNK signaling pathway. Plays an essential role in the anterior neural development. This chain is E3 ubiquitin-protein ligase SH3RF1 (sh3rf1), found in Xenopus laevis (African clawed frog).